The following is a 409-amino-acid chain: Phosphoserine phosphatase SerB2 (409 aa).

ACT domains follow at residues 8–86 (LITV…RSDD) and 102–174 (GRPI…DYGL). The Nucleophile role is filled by Asp185. Mg(2+)-binding residues include Asp185 and Asp187. Asp187 (proton donor) is an active-site residue. Residues Glu194, Arg230, 273–274 (SG), and Lys318 contribute to the substrate site. A Mg(2+)-binding site is contributed by Asp341. Asn344 is a substrate binding site.

The protein belongs to the HAD-like hydrolase superfamily. SerB family. As to quaternary structure, homodimer. The dimeric population shifts to a tetramer in the presence of L-serine, which inactivates the enzyme. Mg(2+) is required as a cofactor. Requires Mn(2+) as cofactor.

The protein resides in the secreted. Its subcellular location is the host cytoplasm. It is found in the host cytosol. The enzyme catalyses O-phospho-L-serine + H2O = L-serine + phosphate. It carries out the reaction O-phospho-D-serine + H2O = D-serine + phosphate. The catalysed reaction is O-phospho-L-seryl-[protein] + H2O = L-seryl-[protein] + phosphate. It catalyses the reaction O-phospho-L-threonyl-[protein] + H2O = L-threonyl-[protein] + phosphate. The protein operates within amino-acid biosynthesis; L-serine biosynthesis; L-serine from 3-phospho-D-glycerate: step 3/3. Clofazimine, a drug being evaluated for XDR and MDR tuberculosis, inhibits SerB2 phosphatase activity and reverses the various functional effects described above and interactions with host proteins. Is inhibited by known PSP inhibitors such as chlorpromazine, DL-AP3 and sodium orthovanadate, but not by okadaic acid. By binding to the ACT domains, amino-acids have various effects on enzyme activity: L-serine and L-glycine act as inhibitors, whereas L-lysine, L-tyrosine and L-phenylalanine are activators. High throughput screen has been performed to identify specific PSP inhibitors with activity against intracellular bacteria; the two best hits identified in this screen, clorobiocin and rosaniline, are bactericidal and kill bacteria in infected macrophages in a dose-dependent manner. Functionally, catalyzes the dephosphorylation of O-phospho-L-serine into L-serine, a step in the L-serine biosynthetic pathway. Exhibits high specificity for L-phosphoserine compared to substrates like L-phosphothreonine (5% relative activity) and L-phosphotyrosine (1.7% relative activity). Its function is as follows. In the host, induces significant cytoskeleton rearrangements through cofilin dephosphorylation and its subsequent activation, and affects the expression of genes that regulate actin dynamics. It specifically interacts with HSP90, HSP70 and HSP27 that block apoptotic pathways but not with other HSPs. Also interacts with GAPDH. It actively dephosphorylates MAP kinase p38 and NF-kappa B p65 (specifically at Ser-536) that play crucial roles in inflammatory and immune responses. This in turn leads to down-regulation of Interleukin 8, a chemotactic and inflammatory cytokine. Thus might help the pathogen to evade the host's immune response. Exogenous addition of purified SerB2 protein to human THP-1 cells (that can be differentiated into macrophage-like cells) induces microtubule rearrangements; the phosphatase activity is co-related to the elicited rearrangements, while addition of the ACT-domains alone elicits no rearrangements. In Mycobacterium tuberculosis (strain ATCC 25618 / H37Rv), this protein is Phosphoserine phosphatase SerB2.